Here is a 250-residue protein sequence, read N- to C-terminus: Uridylate kinase (250 aa).

19–22 (KLSG) contacts ATP. Glycine 61 lines the UMP pocket. Residues glycine 62 and arginine 66 each contribute to the ATP site. Residues aspartate 81 and 142 to 149 (TGNPFFTT) each bind UMP. 4 residues coordinate ATP: threonine 169, glutamine 170, tyrosine 175, and aspartate 178.

It belongs to the UMP kinase family. As to quaternary structure, homohexamer.

The protein resides in the cytoplasm. The enzyme catalyses UMP + ATP = UDP + ADP. Its pathway is pyrimidine metabolism; CTP biosynthesis via de novo pathway; UDP from UMP (UMPK route): step 1/1. With respect to regulation, inhibited by UTP. Its function is as follows. Catalyzes the reversible phosphorylation of UMP to UDP. The sequence is that of Uridylate kinase from Rhodospirillum rubrum (strain ATCC 11170 / ATH 1.1.1 / DSM 467 / LMG 4362 / NCIMB 8255 / S1).